The following is a 471-amino-acid chain: Anthranilate 1,2-dioxygenase large subunit (471 aa).

One can recognise a Rieske domain in the interval 52-160 (IYACHESEIP…IASYRGFVFV (109 aa)). The [2Fe-2S] cluster site is built by C93, H95, C113, and H116. Fe cation is bound by residues H220, H225, and D379.

Belongs to the bacterial ring-hydroxylating dioxygenase alpha subunit family. The anthranilate dioxygenase (AntDO) multicomponent enzyme system is composed of an oxygenase component and a NADH:acceptor reductase component (AntC). The oxygenase component is a heterohexamer of 3 large (AntA) and 3 small (AntB) subunits. Fe cation is required as a cofactor. The cofactor is [2Fe-2S] cluster.

The catalysed reaction is anthranilate + NADH + O2 + 3 H(+) = catechol + NH4(+) + CO2 + NAD(+). It carries out the reaction anthranilate + NADPH + O2 + 3 H(+) = catechol + NH4(+) + CO2 + NADP(+). The protein operates within aromatic compound metabolism; anthranilate degradation via hydroxylation; catechol from anthranilate: step 1/1. In terms of biological role, component of anthranilate dioxygenase multicomponent enzyme system which catalyzes the incorporation of both atoms of molecular oxygen into anthranilate to form catechol. The sequence is that of Anthranilate 1,2-dioxygenase large subunit from Acinetobacter baylyi (strain ATCC 33305 / BD413 / ADP1).